We begin with the raw amino-acid sequence, 419 residues long: Adenylosuccinate synthetase (419 aa).

GTP-binding positions include Gly15–Lys21 and Gly43–Thr45. Residue Asp16 is the Proton acceptor of the active site. The Mg(2+) site is built by Asp16 and Gly43. IMP contacts are provided by residues Asp16–Lys19, Asn41–His44, Thr128, Arg142, Gln223, Thr238, and Arg302. His44 acts as the Proton donor in catalysis. Thr298–Arg304 lines the substrate pocket. GTP-binding positions include Arg304, Lys330–Asp332, and Ser408–Ser410.

It belongs to the adenylosuccinate synthetase family. In terms of assembly, homodimer. Mg(2+) serves as cofactor.

It is found in the cytoplasm. The catalysed reaction is IMP + L-aspartate + GTP = N(6)-(1,2-dicarboxyethyl)-AMP + GDP + phosphate + 2 H(+). It functions in the pathway purine metabolism; AMP biosynthesis via de novo pathway; AMP from IMP: step 1/2. Plays an important role in the de novo pathway of purine nucleotide biosynthesis. Catalyzes the first committed step in the biosynthesis of AMP from IMP. In Sulfurimonas denitrificans (strain ATCC 33889 / DSM 1251) (Thiomicrospira denitrificans (strain ATCC 33889 / DSM 1251)), this protein is Adenylosuccinate synthetase.